A 338-amino-acid chain; its full sequence is Fructose-1,6-bisphosphatase 1 (338 aa).

Thr2 bears the N-acetylthreonine mark. AMP-binding positions include 18 to 22 (VMEEG) and 28 to 32 (TGEMT). Residues Asp69 and Glu98 each coordinate Mg(2+). 113 to 114 (KY) is a binding site for AMP. Mg(2+)-binding residues include Asp119, Leu121, and Asp122. 122 to 125 (DGSS) is a substrate binding site. Arg141 contributes to the AMP binding site. At Lys151 the chain carries N6-succinyllysine. At Ser208 the chain carries Phosphoserine; by PKA. Substrate contacts are provided by residues 213-216 (NEGY), 244-249 (RYVGSM), Tyr265, and 275-277 (KLR). Tyr216, Tyr245, and Tyr265 each carry phosphotyrosine. Glu281 provides a ligand contact to Mg(2+).

Belongs to the FBPase class 1 family. Homotetramer. Requires Mg(2+) as cofactor.

The enzyme catalyses beta-D-fructose 1,6-bisphosphate + H2O = beta-D-fructose 6-phosphate + phosphate. Its pathway is carbohydrate biosynthesis; gluconeogenesis. Subject to complex allosteric regulation. The enzyme can assume an active R-state, or an inactive T-state. Intermediate conformations may exist. AMP acts as an allosteric inhibitor. AMP binding affects the turnover of bound substrate and not the affinity for substrate. Fructose 2,6-bisphosphate acts as a competitive inhibitor. Fructose 2,6-bisphosphate and AMP have synergistic effects. In terms of biological role, catalyzes the hydrolysis of fructose 1,6-bisphosphate to fructose 6-phosphate in the presence of divalent cations, acting as a rate-limiting enzyme in gluconeogenesis. Plays a role in regulating glucose sensing and insulin secretion of pancreatic beta-cells. Appears to modulate glycerol gluconeogenesis in liver. Important regulator of appetite and adiposity; increased expression of the protein in liver after nutrient excess increases circulating satiety hormones and reduces appetite-stimulating neuropeptides and thus seems to provide a feedback mechanism to limit weight gain. The polypeptide is Fructose-1,6-bisphosphatase 1 (FBP1) (Sus scrofa (Pig)).